Reading from the N-terminus, the 774-residue chain is Ion-translocating oxidoreductase complex subunit C (774 aa).

2 4Fe-4S ferredoxin-type domains span residues glutamate 359–histidine 389 and glutamine 399–tyrosine 428. Residues cysteine 369, cysteine 372, cysteine 375, cysteine 379, cysteine 408, cysteine 411, cysteine 414, and cysteine 418 each contribute to the [4Fe-4S] cluster site. A compositionally biased stretch (basic and acidic residues) spans glutamate 453–alanine 490. The disordered stretch occupies residues glutamate 453–alanine 493.

Belongs to the 4Fe4S bacterial-type ferredoxin family. RnfC subfamily. In terms of assembly, the complex is composed of six subunits: RnfA, RnfB, RnfC, RnfD, RnfE and RnfG. Requires [4Fe-4S] cluster as cofactor.

It localises to the cell inner membrane. In terms of biological role, part of a membrane-bound complex that couples electron transfer with translocation of ions across the membrane. The sequence is that of Ion-translocating oxidoreductase complex subunit C from Pseudomonas aeruginosa (strain ATCC 15692 / DSM 22644 / CIP 104116 / JCM 14847 / LMG 12228 / 1C / PRS 101 / PAO1).